A 546-amino-acid polypeptide reads, in one-letter code: Chaperonin GroEL (546 aa).

ATP contacts are provided by residues 29–32 (TLGP), Lys-50, 86–90 (DGTTT), Gly-414, 477–479 (NAL), and Asp-493.

The protein belongs to the chaperonin (HSP60) family. As to quaternary structure, forms a cylinder of 14 subunits composed of two heptameric rings stacked back-to-back. Interacts with the co-chaperonin GroES.

The protein resides in the cytoplasm. It catalyses the reaction ATP + H2O + a folded polypeptide = ADP + phosphate + an unfolded polypeptide.. Its function is as follows. Together with its co-chaperonin GroES, plays an essential role in assisting protein folding. The GroEL-GroES system forms a nano-cage that allows encapsulation of the non-native substrate proteins and provides a physical environment optimized to promote and accelerate protein folding. This is Chaperonin GroEL from Leptospira interrogans serogroup Icterohaemorrhagiae serovar Lai (strain 56601).